A 900-amino-acid polypeptide reads, in one-letter code: MTEIMTPAMRQYYEAKQAYPDTLIFFRMGDFYESFGEDAKTIAKELEITLTARGKDRTGERMPLAGIPYHAIDTYLPRLINKGYKVAICEQLEDPKKAKGVVKRGVVRVVTPGTAIDSSMFSDASNNYLMAVAGREGGKSGKNGEKEMEFGISFLDISTGEFLTTQFTDSENFDKLLSELARMHPAECILPPSLYGNSELTGKLREHTIVQEFAPEVFGTEEAGEKLKTHFGVATLEGMGCQKLEFAVYSAWAALEYAKTTQMRDLTHINTLRTYSNTEFMILDSITLRNLEIVKNVRDEGDENSLYRTLNCTRTPMGNRTLKKWLLKPLLSVEKINPRLDAIEELAEDSLLRYDIRDWLSDVRDIERLVGRIVYGNASARDLVALKKSLGVVPSLRDSLLEKARFEMLKEIAEGLASFSELEELAEMIEIAIMDEPPVSVREGGMIKSGYSPELDELRDISSNSKQWIAAFQQKERERSGIKSLKVGYNKVFGYYIEVTHANSSQVPEDYIRKQTMANAERFFTPELKEKESLILTANEKAVALEYEIFAEITRTLSARSRELQETAERIGTLDVLASLAEATENNNYTRPQLTEDCKILIRDGRHPVVESTVSGGFVPNDTEMDCKENQFLLVTGPNMAGKSTYMRQTALIAIMAQVGSFVPASYASVGIIDQVFTRIGAFDDLASGQSTFMVEMVELANILNNASPKSLVLLDEIGRGTSTYDGYSIAKAVVEFLHNRGKVGIRALFATHYHQLTALEEKLKRVKNYHIAVKEDGHELVFLRKIVPGATDRSYGIHVARLAGVPEKVIERANEILKELERENVLEEAEDGENGKKKKSKATARYTQMLLFDPGSGSRSSEKAKGLSPVEAALKKVNPDEMTPIEALNKLHELKKLLG.

Residue 637–644 (GPNMAGKS) coordinates ATP.

The protein belongs to the DNA mismatch repair MutS family.

This protein is involved in the repair of mismatches in DNA. It is possible that it carries out the mismatch recognition step. This protein has a weak ATPase activity. This chain is DNA mismatch repair protein MutS, found in Methanosarcina acetivorans (strain ATCC 35395 / DSM 2834 / JCM 12185 / C2A).